The chain runs to 626 residues: MQSSAKKVALPAMTLAALGVVFGDIGTSPLYAFAQTFTSAHVNISEATVFGILSLIFWCITLSISFKYVSIVMRADNNGEGGIMSLLALLLRIKQLDSNKKIYLIALGFVGASLFFGDGIITPAISVLSAIEGLSIATPAFDRWLIPIGLGILTALFMVQRHGTATMGKFFGPITMLWFISIGALGLYSIIQTPHILWFINPIWAIEFAIHQPFVAFVAMGSVVLTMTGGEALYADMGHFGRMPIRLAWFIVVCPSLMLNYAGQGALLLRDPQAVSNPFYLLVPEWALFPMIGLATAAAVIASQAVITGVFSMVNQAIQLRYLPRLTVIHTSDVEQGQIYVPFINWVLYISVFFLIILFESSSNLASAYGVAVTMTMLCVTILISVLAYGAWGWPWWKVTLFAVPFLALDGIFVASTSLKILSGGWVPFVIGVVVFTILMTWKRGREIVFNRLETDALPISLFIKSIGSSAETHFVPGDAVFLTGNPNIVPHAMLHNIKHNKVLHSRNIMVTVYTEDIPYVAKEQRVQLEKMDEHFYRISMYYGFKDQPNIPQALEQAYQALDLEFDMMQISFFISRDRLIHTVGDGMSPWREKLFISMQRNTSPVSDFYQIPPNRVVEMGSQIEI.

13 helical membrane passes run 8–28, 44–64, 102–122, 139–159, 171–191, 196–216, 217–237, 249–269, 281–301, 339–359, 377–397, 399–419, and 421–441; these read VALPAMTLAALGVVFGDIGTS, ISEATVFGILSLIFWCITLSI, IYLIALGFVGASLFFGDGIIT, PAFDRWLIPIGLGILTALFMV, FGPITMLWFISIGALGLYSII, ILWFINPIWAIEFAIHQPFVA, FVAMGSVVLTMTGGEALYADM, WFIVVCPSLMLNYAGQGALLL, LLVPEWALFPMIGLATAAAVI, IYVPFINWVLYISVFFLIILF, MLCVTILISVLAYGAWGWPWW, VTLFAVPFLALDGIFVASTSL, and ILSGGWVPFVIGVVVFTILMT.

The protein belongs to the HAK/KUP transporter (TC 2.A.72) family.

It is found in the cell inner membrane. It catalyses the reaction K(+)(in) + H(+)(in) = K(+)(out) + H(+)(out). Functionally, transport of potassium into the cell. Likely operates as a K(+):H(+) symporter. In Acinetobacter baylyi (strain ATCC 33305 / BD413 / ADP1), this protein is Probable potassium transport system protein Kup.